A 214-amino-acid chain; its full sequence is Adenylate kinase (214 aa).

10–15 (GAGKGT) serves as a coordination point for ATP. Residues 30–59 (STGDMLRAAVKAGTPLGLEAKKVMDAGQLV) form an NMP region. AMP-binding positions include T31, R36, 57 to 59 (QLV), 85 to 88 (GFPR), and Q92. The tract at residues 122-159 (GRRVHPGSGRVYHVVFNPPKVEGKDDVTGEDLAIRPDD) is LID. ATP-binding positions include R123 and 132 to 133 (VY). The AMP site is built by R156 and R167. Residue Q200 participates in ATP binding.

This sequence belongs to the adenylate kinase family. Monomer.

The protein resides in the cytoplasm. It catalyses the reaction AMP + ATP = 2 ADP. It participates in purine metabolism; AMP biosynthesis via salvage pathway; AMP from ADP: step 1/1. Catalyzes the reversible transfer of the terminal phosphate group between ATP and AMP. Plays an important role in cellular energy homeostasis and in adenine nucleotide metabolism. The protein is Adenylate kinase of Shewanella baltica (strain OS155 / ATCC BAA-1091).